Consider the following 436-residue polypeptide: Na(+)/H(+) antiporter NhaA 2 (436 aa).

The next 11 helical transmembrane spans lie at Phe-35 to Trp-55, Leu-80 to Leu-100, Ala-116 to Ile-136, Gly-147 to Gly-167, Ala-176 to Phe-196, Phe-201 to Gln-221, Trp-226 to Val-246, Val-283 to Gly-303, Pro-313 to Ser-333, Leu-354 to Leu-374, and Val-385 to Ser-405.

Belongs to the NhaA Na(+)/H(+) (TC 2.A.33) antiporter family.

It localises to the cell membrane. The catalysed reaction is Na(+)(in) + 2 H(+)(out) = Na(+)(out) + 2 H(+)(in). In terms of biological role, na(+)/H(+) antiporter that extrudes sodium in exchange for external protons. The sequence is that of Na(+)/H(+) antiporter NhaA 2 from Salinispora arenicola (strain CNS-205).